We begin with the raw amino-acid sequence, 327 residues long: Aspartate--ammonia ligase (327 aa).

Belongs to the class-II aminoacyl-tRNA synthetase family. AsnA subfamily.

It localises to the cytoplasm. The catalysed reaction is L-aspartate + NH4(+) + ATP = L-asparagine + AMP + diphosphate + H(+). It participates in amino-acid biosynthesis; L-asparagine biosynthesis; L-asparagine from L-aspartate (ammonia route): step 1/1. The protein is Aspartate--ammonia ligase of Fusobacterium nucleatum subsp. nucleatum (strain ATCC 25586 / DSM 15643 / BCRC 10681 / CIP 101130 / JCM 8532 / KCTC 2640 / LMG 13131 / VPI 4355).